The following is a 129-amino-acid chain: Large ribosomal subunit protein bL12 (129 aa).

It belongs to the bacterial ribosomal protein bL12 family. Homodimer. Part of the ribosomal stalk of the 50S ribosomal subunit. Forms a multimeric L10(L12)X complex, where L10 forms an elongated spine to which 2 to 4 L12 dimers bind in a sequential fashion. Binds GTP-bound translation factors.

Forms part of the ribosomal stalk which helps the ribosome interact with GTP-bound translation factors. Is thus essential for accurate translation. This Synechococcus sp. (strain CC9605) protein is Large ribosomal subunit protein bL12.